The chain runs to 274 residues: 2,3,4,5-tetrahydropyridine-2,6-dicarboxylate N-succinyltransferase (274 aa).

Substrate-binding residues include R104 and D141.

The protein belongs to the transferase hexapeptide repeat family. As to quaternary structure, homotrimer.

It is found in the cytoplasm. The catalysed reaction is (S)-2,3,4,5-tetrahydrodipicolinate + succinyl-CoA + H2O = (S)-2-succinylamino-6-oxoheptanedioate + CoA. Its pathway is amino-acid biosynthesis; L-lysine biosynthesis via DAP pathway; LL-2,6-diaminopimelate from (S)-tetrahydrodipicolinate (succinylase route): step 1/3. This chain is 2,3,4,5-tetrahydropyridine-2,6-dicarboxylate N-succinyltransferase, found in Yersinia enterocolitica serotype O:8 / biotype 1B (strain NCTC 13174 / 8081).